The primary structure comprises 199 residues: uncharacterized protein (199 aa).

The next 4 helical transmembrane spans lie at Leu-40–Leu-60, Val-86–Phe-106, Thr-117–Ser-137, and Phe-166–Leu-186.

Its subcellular location is the membrane. This is an uncharacterized protein from Saccharomyces cerevisiae (strain ATCC 204508 / S288c) (Baker's yeast).